The following is a 115-amino-acid chain: Large ribosomal subunit protein uL24 (115 aa).

It belongs to the universal ribosomal protein uL24 family. As to quaternary structure, part of the 50S ribosomal subunit.

In terms of biological role, one of two assembly initiator proteins, it binds directly to the 5'-end of the 23S rRNA, where it nucleates assembly of the 50S subunit. One of the proteins that surrounds the polypeptide exit tunnel on the outside of the subunit. This is Large ribosomal subunit protein uL24 from Aster yellows witches'-broom phytoplasma (strain AYWB).